The chain runs to 348 residues: Cylicin-2 (348 aa).

Residues 25–347 (KKSWNQQHFA…DEKKDAKKKG (323 aa)) form a 31 X 3 AA repeats of K-K-X region. 2 disordered regions span residues 35–59 (LLFPKPQRPGTKRRSKPSQIRDNTV) and 101–348 (PTRT…KKGK). Composition is skewed to basic and acidic residues over residues 103–159 (RTVE…DAKK), 166–217 (KDAE…EKDS), 238–267 (KADEKKDEDGKKDANKGDESKDAKKDAKEI), and 276–342 (KPSS…EKKD). 3 tandem repeats follow at residues 157–184 (AKKDSKKGKKDAEKGKDSATESEDEKGG), 185–212 (AKKDNKKDKKDSNKGKDSATESEGEKGG), and 213–240 (TEKDSKKGKKDSKKGKDSAIELQAVKAD). The 3 X approximate tandem repeats stretch occupies residues 157-240 (AKKDSKKGKK…AIELQAVKAD (84 aa)).

In terms of tissue distribution, testis.

Its subcellular location is the cytoplasm. It is found in the cytoskeleton. The protein localises to the perinuclear theca. It localises to the calyx. In terms of biological role, plays a role in the establishment of normal sperm morphology during spermatogenesis. It is required for acrosome attachment to the nuclear envelope, and proper manchette elongation and disassembly. The chain is Cylicin-2 (CYLC2) from Homo sapiens (Human).